The chain runs to 150 residues: Cytochrome c oxidase subunit 5A, mitochondrial (150 aa).

Residues 1 to 41 (MLGAALRRCAVAATAWAGPRGLLHSAPTPGPAAAIHSVRCY) constitute a mitochondrion transit peptide. An SIFI-degron motif is present at residues 2 to 17 (LGAALRRCAVAATAWA). An N6-acetyllysine mark is found at Lys-87 and Lys-113. Thr-141 carries the post-translational modification Phosphothreonine.

This sequence belongs to the cytochrome c oxidase subunit 5A family. Component of the cytochrome c oxidase (complex IV, CIV), a multisubunit enzyme composed of 14 subunits. The complex is composed of a catalytic core of 3 subunits MT-CO1, MT-CO2 and MT-CO3, encoded in the mitochondrial DNA, and 11 supernumerary subunits COX4I, COX5A, COX5B, COX6A, COX6B, COX6C, COX7A, COX7B, COX7C, COX8 and NDUFA4, which are encoded in the nuclear genome. The complex exists as a monomer or a dimer and forms supercomplexes (SCs) in the inner mitochondrial membrane with NADH-ubiquinone oxidoreductase (complex I, CI) and ubiquinol-cytochrome c oxidoreductase (cytochrome b-c1 complex, complex III, CIII), resulting in different assemblies (supercomplex SCI(1)III(2)IV(1) and megacomplex MCI(2)III(2)IV(2)). Interacts with AFG1L. Interacts with RAB5IF. In terms of processing, in response to mitochondrial stress, the precursor protein is ubiquitinated by the SIFI complex in the cytoplasm before mitochondrial import, leading to its degradation. Within the SIFI complex, UBR4 initiates ubiquitin chain that are further elongated or branched by KCMF1.

It is found in the mitochondrion inner membrane. The protein operates within energy metabolism; oxidative phosphorylation. Its function is as follows. Component of the cytochrome c oxidase, the last enzyme in the mitochondrial electron transport chain which drives oxidative phosphorylation. The respiratory chain contains 3 multisubunit complexes succinate dehydrogenase (complex II, CII), ubiquinol-cytochrome c oxidoreductase (cytochrome b-c1 complex, complex III, CIII) and cytochrome c oxidase (complex IV, CIV), that cooperate to transfer electrons derived from NADH and succinate to molecular oxygen, creating an electrochemical gradient over the inner membrane that drives transmembrane transport and the ATP synthase. Cytochrome c oxidase is the component of the respiratory chain that catalyzes the reduction of oxygen to water. Electrons originating from reduced cytochrome c in the intermembrane space (IMS) are transferred via the dinuclear copper A center (CU(A)) of subunit 2 and heme A of subunit 1 to the active site in subunit 1, a binuclear center (BNC) formed by heme A3 and copper B (CU(B)). The BNC reduces molecular oxygen to 2 water molecules using 4 electrons from cytochrome c in the IMS and 4 protons from the mitochondrial matrix. This Saimiri sciureus (Common squirrel monkey) protein is Cytochrome c oxidase subunit 5A, mitochondrial (COX5A).